Consider the following 549-residue polypeptide: uncharacterized protein (549 aa).

The next 12 helical transmembrane spans lie at 27-47 (ILRF…YVFV), 108-128 (PIVV…GVIF), 146-166 (TGLV…LAIA), 197-217 (AVAI…IPML), 233-253 (FIAI…FLLV), 265-285 (VAAI…LISL), 308-328 (FLVI…LSIL), 352-372 (LVLL…IFGV), 399-419 (TLLV…VGLG), 434-454 (LMLA…VAIG), 472-492 (IVSL…FQAI), and 501-521 (IFIW…VLIG).

It localises to the cell membrane. This is an uncharacterized protein from Mycoplasma pneumoniae (strain ATCC 29342 / M129 / Subtype 1) (Mycoplasmoides pneumoniae).